The following is a 108-amino-acid chain: Tyrosine-protein phosphatase 5 (108 aa).

The region spanning 1 to 108 (QESTVIVMLT…QGNNPSPIIV (108 aa)) is the Tyrosine-protein phosphatase domain. Asp-78 contributes to the substrate binding site.

Belongs to the protein-tyrosine phosphatase family.

The enzyme catalyses O-phospho-L-tyrosyl-[protein] + H2O = L-tyrosyl-[protein] + phosphate. The sequence is that of Tyrosine-protein phosphatase 5 (STY-5) from Styela plicata (Wrinkled sea squirt).